Reading from the N-terminus, the 444-residue chain is Ubiquitin carboxyl-terminal hydrolase MINDY-3 (444 aa).

C51 functions as the Nucleophile in the catalytic mechanism. Phosphoserine is present on S124. H286 serves as the catalytic Proton acceptor.

The protein belongs to the MINDY deubiquitinase family. FAM188 subfamily. In terms of assembly, interacts with COPS5.

It is found in the nucleus. It catalyses the reaction Thiol-dependent hydrolysis of ester, thioester, amide, peptide and isopeptide bonds formed by the C-terminal Gly of ubiquitin (a 76-residue protein attached to proteins as an intracellular targeting signal).. Functionally, hydrolase that can remove 'Lys-48'-linked conjugated ubiquitin from proteins. The sequence is that of Ubiquitin carboxyl-terminal hydrolase MINDY-3 from Mus musculus (Mouse).